Here is a 232-residue protein sequence, read N- to C-terminus: Large ribosomal subunit protein uL1 (232 aa).

Belongs to the universal ribosomal protein uL1 family. In terms of assembly, part of the 50S ribosomal subunit.

Functionally, binds directly to 23S rRNA. The L1 stalk is quite mobile in the ribosome, and is involved in E site tRNA release. Its function is as follows. Protein L1 is also a translational repressor protein, it controls the translation of the L11 operon by binding to its mRNA. The protein is Large ribosomal subunit protein uL1 of Syntrophus aciditrophicus (strain SB).